A 1728-amino-acid polypeptide reads, in one-letter code: Hybrid PKS-NRPS synthetase TAS1 (1728 aa).

The tract at residues 153–499 is condensation (C) domain; sequence SPLSKAQMAL…MDPTLLDFKV (347 aa). The segment at 608–1002 is adenylation (A) domain; sequence KARAASQPDL…KLHIQGRIGN (395 aa). Residues 1141-1219 enclose the Carrier domain; the sequence is MLRRHLTAEV…KQVDCLMGIV (79 aa). Ser-1177 carries the O-(pantetheine 4'-phosphoryl)serine modification. The segment at 1225 to 1256 is disordered; that stretch reads LGSEPTGGSSSRSQSRRSAETSSSSTSAPSSV. Low complexity-rich tracts occupy residues 1226-1237 and 1244-1255; these read GSEPTGGSSSRS and ETSSSSTSAPSS. The region spanning 1262-1714 is the Ketosynthase family 3 (KS3) domain; the sequence is RNLYAIVGIS…SDATWFVIST (453 aa). Residues Cys-1436, His-1579, and Asn-1633 each act as for beta-ketoacyl synthase activity in the active site.

In the N-terminal section; belongs to the NRP synthetase family. It depends on pantetheine 4'-phosphate as a cofactor.

It catalyses the reaction acetoacetyl-CoA + L-isoleucine + ATP = tenuazonic acid + AMP + diphosphate + CoA + 2 H(+). Functionally, hybrid PKS-NRPS synthetase that mediates the biosynthesis of the toxin tenuazonic acid (TeA), an inhibitor of protein biosynthesis on ribosomes by suppressing the release of new protein. TAS1 alone is sufficient for TeA synthesis via the condensation of isoleucine (Ile) with acetoacetyl-CoA by the N-terminal NRPS module and subsequent cyclization conducted by the C-terminal KS domain. The sequence is that of Hybrid PKS-NRPS synthetase TAS1 from Pyricularia oryzae (strain 70-15 / ATCC MYA-4617 / FGSC 8958) (Rice blast fungus).